Here is a 188-residue protein sequence, read N- to C-terminus: Elongation factor P (188 aa).

Position 34 is an N6-(3,6-diaminohexanoyl)-5-hydroxylysine (Lys34).

This sequence belongs to the elongation factor P family. May be beta-lysylated on the epsilon-amino group of Lys-34 by the combined action of EpmA and EpmB, and then hydroxylated on the C5 position of the same residue by EpmC (if this protein is present). Lysylation is critical for the stimulatory effect of EF-P on peptide-bond formation. The lysylation moiety may extend toward the peptidyltransferase center and stabilize the terminal 3-CCA end of the tRNA. Hydroxylation of the C5 position on Lys-34 may allow additional potential stabilizing hydrogen-bond interactions with the P-tRNA.

It localises to the cytoplasm. Its pathway is protein biosynthesis; polypeptide chain elongation. In terms of biological role, involved in peptide bond synthesis. Alleviates ribosome stalling that occurs when 3 or more consecutive Pro residues or the sequence PPG is present in a protein, possibly by augmenting the peptidyl transferase activity of the ribosome. Modification of Lys-34 is required for alleviation. The polypeptide is Elongation factor P (Cronobacter sakazakii (strain ATCC BAA-894) (Enterobacter sakazakii)).